Here is a 184-residue protein sequence, read N- to C-terminus: Ribosome-recycling factor (184 aa).

Residues 134–167 (MNDQLKKDEKNGDITEDELRSGTEDVQKATDNSI) form a disordered region.

This sequence belongs to the RRF family.

The protein localises to the cytoplasm. In terms of biological role, responsible for the release of ribosomes from messenger RNA at the termination of protein biosynthesis. May increase the efficiency of translation by recycling ribosomes from one round of translation to another. The sequence is that of Ribosome-recycling factor from Staphylococcus aureus (strain Mu3 / ATCC 700698).